The following is a 265-amino-acid chain: Pyridoxine 5'-phosphate synthase (265 aa).

Position 6 (Asn6) interacts with 3-amino-2-oxopropyl phosphate. 8–9 contributes to the 1-deoxy-D-xylulose 5-phosphate binding site; the sequence is DH. 3-amino-2-oxopropyl phosphate is bound at residue Arg17. The active-site Proton acceptor is the His42. Arg44 and His49 together coordinate 1-deoxy-D-xylulose 5-phosphate. Glu69 acts as the Proton acceptor in catalysis. Thr99 contributes to the 1-deoxy-D-xylulose 5-phosphate binding site. Residue His213 is the Proton donor of the active site. 3-amino-2-oxopropyl phosphate contacts are provided by residues Gly214 and 235-236; that span reads GQ.

Belongs to the PNP synthase family. In terms of assembly, homooctamer; tetramer of dimers.

The protein localises to the cytoplasm. The enzyme catalyses 3-amino-2-oxopropyl phosphate + 1-deoxy-D-xylulose 5-phosphate = pyridoxine 5'-phosphate + phosphate + 2 H2O + H(+). It participates in cofactor biosynthesis; pyridoxine 5'-phosphate biosynthesis; pyridoxine 5'-phosphate from D-erythrose 4-phosphate: step 5/5. In terms of biological role, catalyzes the complicated ring closure reaction between the two acyclic compounds 1-deoxy-D-xylulose-5-phosphate (DXP) and 3-amino-2-oxopropyl phosphate (1-amino-acetone-3-phosphate or AAP) to form pyridoxine 5'-phosphate (PNP) and inorganic phosphate. The chain is Pyridoxine 5'-phosphate synthase from Nitratiruptor sp. (strain SB155-2).